Here is a 443-residue protein sequence, read N- to C-terminus: MFLAQEIIRKKRNGLALSSEEIQFFVQGITTNSVSEGQIAALGMAVYFNDMNMDERIALTTAMRDSGTVLNWQSLGLNGPVIDKHSTGGVGDVISLMLGPMAAACGGYVPMISGRGLGHTGGTLDKFDAIPGYQTEPSSELFRKVVKDVGVAIIGQTGDLVPADKRFYSIRDNTATVESISLITASILSKKLACNLDALAMDVKVGSGAFMPTYEASEELARSIAAVANGAGTKTTALLTDMNQVLASCAGNAVEVKEAIDFLTGAYRNPRLYEVTMGLCAEMLLLGGLASNEADARAKLNRVLDNGRAAELFGKMVSGLGGPVDFVENYSKYLPQSQIIRPVFADMQGYAYSMDTRELGLAVVTLGGGRRKPGDALDYSVGLTQVCALGDKVDSSTPIAVIHAQSEAAFAEAELAVKKAIHIGETAPEKTPEIYAYIRASDL.

It belongs to the thymidine/pyrimidine-nucleoside phosphorylase family. Homodimer.

It carries out the reaction thymidine + phosphate = 2-deoxy-alpha-D-ribose 1-phosphate + thymine. It functions in the pathway pyrimidine metabolism; dTMP biosynthesis via salvage pathway; dTMP from thymine: step 1/2. Functionally, the enzymes which catalyze the reversible phosphorolysis of pyrimidine nucleosides are involved in the degradation of these compounds and in their utilization as carbon and energy sources, or in the rescue of pyrimidine bases for nucleotide synthesis. The polypeptide is Thymidine phosphorylase (Shewanella baltica (strain OS223)).